Consider the following 80-residue polypeptide: MAVKERVGVVVSDKMDKTVVVAIENRSPHPKYGKIVVKTQKFKAHDAENQAKQGDRVRIRETRPLSKTKRWEVAEILTDS.

This sequence belongs to the universal ribosomal protein uS17 family. As to quaternary structure, part of the 30S ribosomal subunit.

Its function is as follows. One of the primary rRNA binding proteins, it binds specifically to the 5'-end of 16S ribosomal RNA. The protein is Small ribosomal subunit protein uS17 of Microcystis aeruginosa (strain NIES-843 / IAM M-2473).